Consider the following 486-residue polypeptide: MATFKDACYYYKRINKLNHAVLKLGVNDTWRPSPPTKYKGWCLDCCQHTDLTYCRGCTMYHVCQWCSQYGRCFLDDEPHLLRMRTFKNEITKDDLKNLIDMYSTLFPMNQKIVCKFINNTKQHKCRNECMTQWYNHLLMPITLQSLSIELDGDVYYVFGYYDNMNSVNQTPFSFTNLIDMYDKLLLDDVNFVRMSFLPTSLQQEYAIRYFSKSRFISEQRKCVNDSHFSINVLENLHNPSFKVQITRNCSELLLGWNEACKLVKNVSAYFDMLKTSRIEFYSVSTRCRIFTQHKLKMASKLIKPNYITSNHRTSATEVHNCKWCSVNNSYTVWNDFRVKKIYDNIFSFLRALVKSNVNIGHRSSQEKIYEYVEDVLNVCDNEKWKTSIMKVFNCLEPVELDNVKYVLFNHEINWDVINVLVQSIGKVPQILTLKNVITIIQSIIYEWFDIRYMRNTPMVTFTIDKLRRLHTELKTAEYDSGISDVE.

Residues 1–81 (MATFKDACYY…CFLDDEPHLL (81 aa)) form an RNA-binding region. A zinc-binding domain region spans residues 42–79 (CLDCCQHTDLTYCRGCTMYHVCQWCSQYGRCFLDDEPH). An important for cytoskeleton localization region spans residues 82–176 (RMRTFKNEIT…VNQTPFSFTN (95 aa)). The tract at residues 317–486 (EVHNCKWCSV…EYDSGISDVE (170 aa)) is interaction with host IRF3. An IKBKB-like degron (ILD) motif motif is present at residues 479–483 (DSGIS). The short motif at 480–483 (SGIS) is the pLxIS motif element.

Belongs to the rotavirus NSP1 family. As to quaternary structure, interacts (via C-terminus) with host IRF3; this interaction leads to IRF3 degradation. Interacts with host IRF7; this interaction leads to IRF7 degradation. Interacts with host CUL1 and CUL3. Interacts with host BTRC. In terms of processing, the C-terminal region is phosphorylated by host CKII/CSNK2A1. Phosphorylation of the DSGXS motif is essential for host NF-kappa-B inhibition.

The protein localises to the host cytoplasm. The protein resides in the host cytoskeleton. In terms of biological role, plays a role in the inhibition of host innate immunity by inducing the degradation of key host factors required to activate interferon production such as IRF3, IRF5 or IRF7. Associates with components of cullin RING ligases (CRLs) including CUL1 or CUL3, which are essential multisubunit ubiquitination complexes, to modulate their activities. Recognizes the host NF-kappa-B regulator BTRC through the presence of a DSGXS motif in the C-terminal substrate recognition domain. This chain is Non-structural protein 1, found in Rotavirus A (strain RVA/Human/United States/Wa/1974/G1P1A[8]) (RV-A).